The sequence spans 357 residues: Arginine kinase (357 aa).

Residue Ala-2 is modified to N-acetylalanine. The Phosphagen kinase N-terminal domain maps to 9–91 (KLEEGFKKLQ…FDPIIEDYHK (83 aa)). 64-68 (GVGVY) contributes to the L-arginine binding site. The region spanning 119–356 (FVISTRVRCG…LELIKIEKEM (238 aa)) is the Phosphagen kinase C-terminal domain. ATP is bound by residues 122–126 (STRVR) and His-185. Glu-225 is an L-arginine binding site. Arg-229 contributes to the ATP binding site. Residue Cys-271 coordinates L-arginine. ATP is bound by residues 280-284 (RASVH) and 309-314 (RGTRGE). Glu-314 is an L-arginine binding site.

It belongs to the ATP:guanido phosphotransferase family.

The enzyme catalyses L-arginine + ATP = N(omega)-phospho-L-arginine + ADP + H(+). This chain is Arginine kinase, found in Pachygrapsus marmoratus (Marbled rock crab).